We begin with the raw amino-acid sequence, 336 residues long: Ferrochelatase (336 aa).

Fe cation contacts are provided by H206 and E287.

Belongs to the ferrochelatase family.

It is found in the cytoplasm. It carries out the reaction heme b + 2 H(+) = protoporphyrin IX + Fe(2+). It functions in the pathway porphyrin-containing compound metabolism; protoheme biosynthesis; protoheme from protoporphyrin-IX: step 1/1. Functionally, catalyzes the ferrous insertion into protoporphyrin IX. This is Ferrochelatase from Neisseria meningitidis serogroup C / serotype 2a (strain ATCC 700532 / DSM 15464 / FAM18).